The following is a 312-amino-acid chain: MANNDAVLKRLEQKGAEADQIIEYLKQQVSLLKEKAILQATLREEKKLRVENAKLKKEIEELKQELIQAEIQNGVKQIPFPSGTPLHANSMVSENVIQSTAVTTVSSGTKEQIKGGTGDEKKAKEKIEKKGEKKEKKQQSIAGSADSKPIDVSRLDLRIGCIITARKHPDADSLYVEEVDVGEIAPRTVVSGLVNHVPLEQMQNRMVILLCNLKPAKMRGVLSQAMVMCASSPEKIEILAPPNGSVPGDRITFDAFPGEPDKELNPKKKIWEQIQPDLHTNDECVATYKGVPFEVKGKGVCRAQTMSNSGIK.

Methionine 1 carries the post-translational modification N-acetylmethionine. Position 2 is an N-acetylalanine (alanine 2). Positions 6–46 (AVLKRLEQKGAEADQIIEYLKQQVSLLKEKAILQATLREEK) are required for fibroblast proliferation. An interaction with HSP90B1 region spans residues 54-194 (KLKKEIEELK…APRTVVSGLV (141 aa)). The segment at 101–114 (AVTTVSSGTKEQIK) is required for endothelial cell death. The disordered stretch occupies residues 107-147 (SGTKEQIKGGTGDEKKAKEKIEKKGEKKEKKQQSIAGSADS). Residues 111-138 (EQIKGGTGDEKKAKEKIEKKGEKKEKKQ) are compositionally biased toward basic and acidic residues. The required for endothelial cell migration stretch occupies residues 114–192 (KGGTGDEKKA…EIAPRTVVSG (79 aa)). Residue lysine 137 forms a Glycyl lysine isopeptide (Lys-Gly) (interchain with G-Cter in SUMO1) linkage. Phosphoserine is present on serine 140. The region spanning 151–252 (DVSRLDLRIG…NGSVPGDRIT (102 aa)) is the tRNA-binding domain. The residue at position 269 (lysine 269) is an N6-succinyllysine.

As to quaternary structure, homodimer. Part of the multisynthetase complex (MSC), a multisubunit complex that groups tRNA ligases for Arg (RARS1), Asp (DARS1), Gln (QARS1), Ile (IARS1), Leu (LARS1), Lys (KARS1), Met (MARS1) the bifunctional ligase for Glu and Pro (EPRS1) and the auxiliary subunits AIMP1/p43, AIMP2/p38 and EEF1E1/p18. Interacts (via N-terminus) with RARS1 (via N-terminus). Part of a complex composed of RARS1, QARS1 and AIMP1. Interacts (via C-terminus) with SMURF2. Interacts (via N-terminus) with HSP90B1/gp96 (via C-terminus). Interacts with PSMA7. Interacts with TARS3. Cleaved by caspase-7 in response to apoptosis to produce EMAP-II.

The protein resides in the nucleus. It is found in the cytoplasm. Its subcellular location is the cytosol. The protein localises to the secreted. It localises to the endoplasmic reticulum. The protein resides in the golgi apparatus. Non-catalytic component of the multisynthase complex. Stimulates the catalytic activity of cytoplasmic arginyl-tRNA synthase. Binds tRNA. Possesses inflammatory cytokine activity. Negatively regulates TGF-beta signaling through stabilization of SMURF2 by binding to SMURF2 and inhibiting its SMAD7-mediated degradation. Involved in glucose homeostasis through induction of glucagon secretion at low glucose levels. Promotes dermal fibroblast proliferation and wound repair. Regulates KDELR1-mediated retention of HSP90B1/gp96 in the endoplasmic reticulum. Plays a role in angiogenesis by inducing endothelial cell migration at low concentrations and endothelian cell apoptosis at high concentrations. Induces maturation of dendritic cells and monocyte cell adhesion. Modulates endothelial cell responses by degrading HIF-1A through interaction with PSMA7. The chain is Aminoacyl tRNA synthase complex-interacting multifunctional protein 1 (AIMP1) from Homo sapiens (Human).